The following is a 269-amino-acid chain: 2' cyclic ADP-D-ribose synthase AbTIR (269 aa).

The stretch at 31–99 (LKTKLSEISR…KQQKDEIEHQ (69 aa)) forms a coiled coil. The 134-residue stretch at 133–266 (PEYDLFISHA…EIAHQLADVI (134 aa)) folds into the TIR domain. NAD(+) contacts are provided by S143, K172, and K202. Residue E208 is part of the active site. K245 is an NAD(+) binding site.

Homodimer. In the presence of NAD(+) analog 8-amino-isoquinoline adenine dinucleotide (3AD) forms filaments with 3AD between monomers; conformational changes occur upon 3AD binding.

It carries out the reaction NAD(+) = 2'cADPR + nicotinamide + H(+). The catalysed reaction is NAD(+) + H2O = ADP-D-ribose + nicotinamide + H(+). The enzyme catalyses NADP(+) + H2O = ADP-D-ribose 2'-phosphate + nicotinamide + H(+). Functionally, NAD(+) hydrolase (NADase) that catalyzes cleavage of NAD(+) into ADP-D-ribose (ADPR) and nicotinamide. In addition to ADPR, also generates a cyclization variant of cyclic ADPR (cADPR), termed 2'cADPR (v-cADPR). Cleaves NADP(+), but does not cyclize the product. This chain is 2' cyclic ADP-D-ribose synthase AbTIR, found in Acinetobacter baumannii (strain 1295743).